The chain runs to 135 residues: MLLLRWPTFCCLWVFGLGQLEQTELSVTRATDESAQISCIVSLPYFSNTAIHWYRQKAKKFEYLIYVSTNYNQRPLGGKNKKIEASKDFQTSTSTLKINYLKKEDEATYYCAVCRSGTSWVKIFAKGTKLVVIPP.

The signal sequence occupies residues 1 to 18; the sequence is MLLLRWPTFCCLWVFGLG. The segment at 19-114 is v segment; that stretch reads QLEQTELSVT…DEATYYCAVC (96 aa). The j segment stretch occupies residues 115–135; the sequence is RSGTSWVKIFAKGTKLVVIPP.

This chain is T-cell receptor gamma chain V region 5/10-13 (Tcrg-V1), found in Mus musculus (Mouse).